The following is a 170-amino-acid chain: MKQEKTLLLQEVEDKISAAQGFILLRYLRFTAAYSREFRNSLSGVSAEFEVLKKRIFFKAIEAAGLEVDCSDTDGHLGVVFSCGDPVSAAKQVLDFNKQHKDSLVFLAGRMDNASLSGAEVEAVAKLPSLKELRQQVVGLFAAPMSQVVGIMNSVLSGVISCVDQKAGKN.

It belongs to the universal ribosomal protein uL10 family. As to quaternary structure, part of the ribosomal stalk of the 50S ribosomal subunit. The N-terminus interacts with L11 and the large rRNA to form the base of the stalk. The C-terminus forms an elongated spine to which L12 dimers bind in a sequential fashion forming a multimeric L10(L12)X complex.

Functionally, forms part of the ribosomal stalk, playing a central role in the interaction of the ribosome with GTP-bound translation factors. This is Large ribosomal subunit protein uL10 (rplJ) from Chlamydia pneumoniae (Chlamydophila pneumoniae).